A 218-amino-acid chain; its full sequence is MQFVAHDNFHTLEVRKVRYLHSRQVTFLLAGLLLNIEQFVKAIKERNNEFKIDIFLRSLLYQLPLHLGDHVHDDVRKSLLVPEPELCAWFSLQTGYAPASTSGRVNLYVPGTKTSRRRIIQRSLASNFSEKFKRFPECLFVGFEHFQRFLSIWTRDAERRLFSGCREIPVGSHTLVELANLGELLRVMVASEQFHNSRLLSRLAVHCYKIYGEDGFIS.

The F-box-like domain occupies 63-67 (LPLHL).

It belongs to the polerovirus P0 protein family. As to quaternary structure, interacts (via F-box-like domain) with host AGO1; this interaction targets AGO1 for degradation, and thereby suppresses the silencing function of the latter. Interacts (via F-box-like domain) with host ASK1 and ASK2 (SKP proteins); these interactions are essential for viral pathogenicity. Part of a SCF P0 complex composed of P0 and the host proteins SKP and CUL1.

In terms of biological role, suppressor of RNA-mediated gene silencing, also known as post-transcriptional gene silencing (PTGS), a mechanism of plant viral defense that limits the accumulation of viral RNAs. The P0 protein suppresses local PTGS using its F-box-like domain to mediate destabilization and degradation of the AGO1 protein. The sequence is that of Suppressor of silencing P0 from Beet western yellows virus (isolate GB1) (BWYV).